Here is a 473-residue protein sequence, read N- to C-terminus: Photosystem II CP43 reaction center protein (473 aa).

Positions 1-14 (MKTLYSLRRFYPVE) are excised as a propeptide. Residue Thr-15 is modified to N-acetylthreonine. Residue Thr-15 is modified to Phosphothreonine. Transmembrane regions (helical) follow at residues 69–93 (LFEVAHFVPEKPMYEQGLILLPHLA), 134–155 (LLGPETLEESFPFFGYVWKDRN), 178–200 (KALYFGGVYDTWAPGGGDVRKIT), 255–275 (KPFAWARRAFVWSGEAYLSYS), and 291–312 (WFNNTAYPSEFYGPTGPEASQA). [CaMn4O5] cluster is bound at residue Glu-367. The chain crosses the membrane as a helical span at residues 447 to 471 (RARAAAAGFEKGIDRDLEPVLSMTP).

It belongs to the PsbB/PsbC family. PsbC subfamily. As to quaternary structure, PSII is composed of 1 copy each of membrane proteins PsbA, PsbB, PsbC, PsbD, PsbE, PsbF, PsbH, PsbI, PsbJ, PsbK, PsbL, PsbM, PsbT, PsbX, PsbY, PsbZ, Psb30/Ycf12, at least 3 peripheral proteins of the oxygen-evolving complex and a large number of cofactors. It forms dimeric complexes. Binds multiple chlorophylls and provides some of the ligands for the Ca-4Mn-5O cluster of the oxygen-evolving complex. It may also provide a ligand for a Cl- that is required for oxygen evolution. PSII binds additional chlorophylls, carotenoids and specific lipids. serves as cofactor.

It is found in the plastid. The protein localises to the chloroplast thylakoid membrane. Its function is as follows. One of the components of the core complex of photosystem II (PSII). It binds chlorophyll and helps catalyze the primary light-induced photochemical processes of PSII. PSII is a light-driven water:plastoquinone oxidoreductase, using light energy to abstract electrons from H(2)O, generating O(2) and a proton gradient subsequently used for ATP formation. The protein is Photosystem II CP43 reaction center protein of Phalaenopsis aphrodite subsp. formosana (Moth orchid).